The sequence spans 89 residues: Large ribosomal subunit protein eL34 (89 aa).

A disordered region spans residues 1 to 22 (MPAPRYKSGSSKKVYRKAPGNS).

Belongs to the eukaryotic ribosomal protein eL34 family.

The protein is Large ribosomal subunit protein eL34 of Methanococcus maripaludis (strain C5 / ATCC BAA-1333).